Consider the following 96-residue polypeptide: Large ribosomal subunit protein bL28 (96 aa).

This sequence belongs to the bacterial ribosomal protein bL28 family.

This chain is Large ribosomal subunit protein bL28, found in Methylocella silvestris (strain DSM 15510 / CIP 108128 / LMG 27833 / NCIMB 13906 / BL2).